Reading from the N-terminus, the 86-residue chain is Large ribosomal subunit protein bL27 (86 aa).

The disordered stretch occupies residues 1–21 (MAHHKGGGSSRNGKDSNPQYL).

The protein belongs to the bacterial ribosomal protein bL27 family.

The polypeptide is Large ribosomal subunit protein bL27 (Coprothermobacter proteolyticus (strain ATCC 35245 / DSM 5265 / OCM 4 / BT)).